Here is a 376-residue protein sequence, read N- to C-terminus: Protein RecA (376 aa).

65 to 72 (GPESSGKT) lines the ATP pocket. The tract at residues 316–376 (EHDEIFTSVR…GDDLSDDDIY (61 aa)) is disordered. A compositionally biased stretch (basic and acidic residues) spans 331 to 350 (GEKKDSDEDPGDNKKSKDSA). Residues 366–376 (PGDDLSDDDIY) show a composition bias toward acidic residues.

The protein belongs to the RecA family.

The protein localises to the cytoplasm. Functionally, can catalyze the hydrolysis of ATP in the presence of single-stranded DNA, the ATP-dependent uptake of single-stranded DNA by duplex DNA, and the ATP-dependent hybridization of homologous single-stranded DNAs. It interacts with LexA causing its activation and leading to its autocatalytic cleavage. This chain is Protein RecA, found in Oenococcus oeni (strain ATCC BAA-331 / PSU-1).